Here is a 385-residue protein sequence, read N- to C-terminus: Succinate--CoA ligase [ADP-forming] subunit beta (385 aa).

The 236-residue stretch at 9–244 (KEVLRKYGVS…LDEEDPKEIE (236 aa)) folds into the ATP-grasp domain. ATP is bound by residues Lys46, 53–55 (GRG), Glu99, Cys102, and Glu107. The Mg(2+) site is built by Asn199 and Asp213. Residues Asn264 and 321-323 (GIM) contribute to the substrate site.

It belongs to the succinate/malate CoA ligase beta subunit family. Heterotetramer of two alpha and two beta subunits. Requires Mg(2+) as cofactor.

It carries out the reaction succinate + ATP + CoA = succinyl-CoA + ADP + phosphate. It catalyses the reaction GTP + succinate + CoA = succinyl-CoA + GDP + phosphate. It participates in carbohydrate metabolism; tricarboxylic acid cycle; succinate from succinyl-CoA (ligase route): step 1/1. Succinyl-CoA synthetase functions in the citric acid cycle (TCA), coupling the hydrolysis of succinyl-CoA to the synthesis of either ATP or GTP and thus represents the only step of substrate-level phosphorylation in the TCA. The beta subunit provides nucleotide specificity of the enzyme and binds the substrate succinate, while the binding sites for coenzyme A and phosphate are found in the alpha subunit. The chain is Succinate--CoA ligase [ADP-forming] subunit beta from Bacillus velezensis (strain DSM 23117 / BGSC 10A6 / LMG 26770 / FZB42) (Bacillus amyloliquefaciens subsp. plantarum).